The primary structure comprises 290 residues: tRNA (adenine(58)-N(1))-methyltransferase catalytic subunit TRMT61A (290 aa).

Serine 2 carries the post-translational modification N-acetylserine. Substrate stretches follow at residues 20–22 (LGH), 35–42 (QTQTRHGV), 64–65 (GW), 85–89 (QILYS), and 110–117 (SGTGSGSV). S-adenosyl-L-methionine contacts are provided by residues leucine 87, 114–116 (SGS), glutamate 135, arginine 140, 163–164 (DV), and aspartate 181. Substrate regions lie at residues 180-183 (LDIP) and 205-212 (SFSPCIEQ). Threonine 279 contributes to the substrate binding site.

This sequence belongs to the class I-like SAM-binding methyltransferase superfamily. TRM61 family. As to quaternary structure, heterotetramer; composed of two copies of TRMT6 and two copies of TRMT61A.

Its subcellular location is the nucleus. It catalyses the reaction adenosine(58) in tRNA + S-adenosyl-L-methionine = N(1)-methyladenosine(58) in tRNA + S-adenosyl-L-homocysteine + H(+). The catalysed reaction is an adenosine in mRNA + S-adenosyl-L-methionine = an N(1)-methyladenosine in mRNA + S-adenosyl-L-homocysteine + H(+). In terms of biological role, catalytic subunit of tRNA (adenine-N(1)-)-methyltransferase, which catalyzes the formation of N(1)-methyladenine at position 58 (m1A58) in initiator methionyl-tRNA. Catalytic subunit of mRNA N(1)-methyltransferase complex, which mediates methylation of adenosine residues at the N(1) position of a small subset of mRNAs: N(1) methylation takes place in tRNA T-loop-like structures of mRNAs and is only present at low stoichiometries. This chain is tRNA (adenine(58)-N(1))-methyltransferase catalytic subunit TRMT61A (Trmt61a), found in Rattus norvegicus (Rat).